Reading from the N-terminus, the 505-residue chain is Transcription factor VHR2 (505 aa).

Positions 1–16 (MIDDTENSKIHLEGSH) are enriched in basic and acidic residues. Disordered regions lie at residues 1–23 (MIDD…KYTG), 105–179 (NRKR…LPYP), and 421–460 (QSNP…STSA). The span at 133–148 (PSSSNMGSCSASNASS) shows a compositional bias: low complexity. Residues 421-443 (QSNPMRPHSTSEVLSAHSSTKDA) are compositionally biased toward polar residues.

It belongs to the VHR1 family.

Its subcellular location is the nucleus. In terms of biological role, transcription factor that regulates ERG9, but seems to have a more global function in transcription. The chain is Transcription factor VHR2 (VHR2) from Saccharomyces cerevisiae (strain ATCC 204508 / S288c) (Baker's yeast).